Consider the following 233-residue polypeptide: N-(5'-phosphoribosyl)anthranilate isomerase (233 aa).

The protein belongs to the TrpF family.

The enzyme catalyses N-(5-phospho-beta-D-ribosyl)anthranilate = 1-(2-carboxyphenylamino)-1-deoxy-D-ribulose 5-phosphate. It functions in the pathway amino-acid biosynthesis; L-tryptophan biosynthesis; L-tryptophan from chorismate: step 3/5. The protein is N-(5'-phosphoribosyl)anthranilate isomerase of Synechococcus sp. (strain JA-2-3B'a(2-13)) (Cyanobacteria bacterium Yellowstone B-Prime).